The following is a 550-amino-acid chain: Glucose-6-phosphate isomerase (550 aa).

Glu356 functions as the Proton donor in the catalytic mechanism. Catalysis depends on residues His387 and Lys515.

This sequence belongs to the GPI family.

It localises to the cytoplasm. The enzyme catalyses alpha-D-glucose 6-phosphate = beta-D-fructose 6-phosphate. It functions in the pathway carbohydrate biosynthesis; gluconeogenesis. Its pathway is carbohydrate degradation; glycolysis; D-glyceraldehyde 3-phosphate and glycerone phosphate from D-glucose: step 2/4. In terms of biological role, catalyzes the reversible isomerization of glucose-6-phosphate to fructose-6-phosphate. This chain is Glucose-6-phosphate isomerase, found in Vibrio cholerae serotype O1 (strain ATCC 39541 / Classical Ogawa 395 / O395).